A 393-amino-acid chain; its full sequence is O-phospho-L-seryl-tRNA:Cys-tRNA synthase 1 (393 aa).

Residues 85–86, Asn190, and 213–215 each bind pyridoxal 5'-phosphate; these read AR and SGH. At Lys216 the chain carries N6-(pyridoxal phosphate)lysine.

Belongs to the SepCysS family. Homodimer. Interacts with SepRS. Pyridoxal 5'-phosphate is required as a cofactor.

It catalyses the reaction O-phospho-L-seryl-tRNA(Cys) + hydrogen sulfide + H(+) = L-cysteinyl-tRNA(Cys) + phosphate. Functionally, converts O-phospho-L-seryl-tRNA(Cys) (Sep-tRNA(Cys)) to L-cysteinyl-tRNA(Cys) (Cys-tRNA(Cys)). This chain is O-phospho-L-seryl-tRNA:Cys-tRNA synthase 1, found in Methanospirillum hungatei JF-1 (strain ATCC 27890 / DSM 864 / NBRC 100397 / JF-1).